The following is a 169-amino-acid chain: MLRSEKPVAVEDIVNIYKESPSIIITHYHGLTVSQVSSLRESLKSKEAGFKVVKNTLAKIAANQTGLNSIANLFAGPTAIVYSKEPVEMAKLVVNFAKANDNLKIIGGIVDNHVLDEHSIKDFSKLPTLNELRGNIVGLLQAPATKVVGVLQATSSSMARVIQAHASKN.

Belongs to the universal ribosomal protein uL10 family. Part of the ribosomal stalk of the 50S ribosomal subunit. The N-terminus interacts with L11 and the large rRNA to form the base of the stalk. The C-terminus forms an elongated spine to which L12 dimers bind in a sequential fashion forming a multimeric L10(L12)X complex.

Functionally, forms part of the ribosomal stalk, playing a central role in the interaction of the ribosome with GTP-bound translation factors. This chain is Large ribosomal subunit protein uL10, found in Rickettsia peacockii (strain Rustic).